We begin with the raw amino-acid sequence, 315 residues long: Methionyl-tRNA formyltransferase (315 aa).

115–118 (SLLP) is a binding site for (6S)-5,6,7,8-tetrahydrofolate.

This sequence belongs to the Fmt family.

It carries out the reaction L-methionyl-tRNA(fMet) + (6R)-10-formyltetrahydrofolate = N-formyl-L-methionyl-tRNA(fMet) + (6S)-5,6,7,8-tetrahydrofolate + H(+). Its function is as follows. Attaches a formyl group to the free amino group of methionyl-tRNA(fMet). The formyl group appears to play a dual role in the initiator identity of N-formylmethionyl-tRNA by promoting its recognition by IF2 and preventing the misappropriation of this tRNA by the elongation apparatus. This is Methionyl-tRNA formyltransferase from Dehalococcoides mccartyi (strain ATCC BAA-2100 / JCM 16839 / KCTC 5957 / BAV1).